A 352-amino-acid chain; its full sequence is Dof zinc finger protein DOF1.8 (352 aa).

Positions 24 to 46 are disordered; it reads LKQQSNPPSPATPVERKARPEKD. The span at 37-46 shows a compositional bias: basic and acidic residues; sequence VERKARPEKD. The Dof-type zinc finger occupies 49 to 103; sequence LNCPRCNSLNTKFCYYNNYSLTQPRYFCKDCRRYWTAGGSLRNIPVGGGVRKNKR. Zn(2+)-binding residues include C51, C54, C76, and C79. Disordered stretches follow at residues 93–136 and 265–334; these read PVGG…PLPH and GGDP…VGFW. Residues 104–129 are compositionally biased toward low complexity; sequence SSSNSSSSSPSSSSSSKKPLFANNNT. Residues 310-323 are compositionally biased toward basic and acidic residues; sequence ENNDEHSDHEHEKE.

It localises to the nucleus. Functionally, transcription factor that binds specifically to a 5'-AA[AG]G-3' consensus core sequence. This Arabidopsis thaliana (Mouse-ear cress) protein is Dof zinc finger protein DOF1.8 (DOF1.8).